Consider the following 237-residue polypeptide: Neurogenin-1 (237 aa).

Residues 35–83 form a disordered region; that stretch reads LQQAASASGPPAPARRGAPNISRASEVPGAQDDEQERRRRRGRTRVRSE. Positions 38-53 are enriched in low complexity; it reads AASASGPPAPARRGAP. Residues 92–144 form the bHLH domain; the sequence is SRRVKANDRERNRMHNLNAALDALRSVLPSFPDDTKLTKIETLRFAYNYIWAL. Residues 175–209 are disordered; that stretch reads GPPSPASDAESWGSGAAAASPLSDPSSPAASEDFT. Over residues 180–207 the composition is skewed to low complexity; the sequence is ASDAESWGSGAAAASPLSDPSSPAASED.

In terms of assembly, efficient DNA binding requires dimerization with another bHLH protein. In terms of tissue distribution, expression restricted to the embryonic nervous system.

The protein localises to the nucleus. Its function is as follows. Acts as a transcriptional regulator. Involved in the initiation of neuronal differentiation. Activates transcription by binding to the E box (5'-CANNTG-3'). Associates with chromatin to enhancer regulatory elements in genes encoding key transcriptional regulators of neurogenesis. This Homo sapiens (Human) protein is Neurogenin-1 (NEUROG1).